The primary structure comprises 487 residues: N-succinylglutamate 5-semialdehyde dehydrogenase (487 aa).

An NAD(+)-binding site is contributed by 221–226; it reads GSSDTG. Active-site residues include Glu-244 and Cys-278.

This sequence belongs to the aldehyde dehydrogenase family. AstD subfamily.

The catalysed reaction is N-succinyl-L-glutamate 5-semialdehyde + NAD(+) + H2O = N-succinyl-L-glutamate + NADH + 2 H(+). It functions in the pathway amino-acid degradation; L-arginine degradation via AST pathway; L-glutamate and succinate from L-arginine: step 4/5. Its function is as follows. Catalyzes the NAD-dependent reduction of succinylglutamate semialdehyde into succinylglutamate. The sequence is that of N-succinylglutamate 5-semialdehyde dehydrogenase from Burkholderia lata (strain ATCC 17760 / DSM 23089 / LMG 22485 / NCIMB 9086 / R18194 / 383).